A 251-amino-acid chain; its full sequence is Uridylate kinase (251 aa).

An ATP-binding site is contributed by 11–14; the sequence is KLSG. Residues 19 to 24 form an involved in allosteric activation by GTP region; that stretch reads GNQGFG. A UMP-binding site is contributed by Gly-53. The ATP site is built by Gly-54 and Arg-58. UMP-binding positions include Asp-73 and 134–141; that span reads TGNPYFTT. The ATP site is built by Thr-161, Tyr-167, and Asp-170.

The protein belongs to the UMP kinase family. In terms of assembly, homohexamer.

It is found in the cytoplasm. It catalyses the reaction UMP + ATP = UDP + ADP. It participates in pyrimidine metabolism; CTP biosynthesis via de novo pathway; UDP from UMP (UMPK route): step 1/1. Its activity is regulated as follows. Allosterically activated by GTP. Inhibited by UTP. Catalyzes the reversible phosphorylation of UMP to UDP. The protein is Uridylate kinase of Protochlamydia amoebophila (strain UWE25).